Here is a 426-residue protein sequence, read N- to C-terminus: Serine hydroxymethyltransferase (426 aa).

(6S)-5,6,7,8-tetrahydrofolate contacts are provided by residues Leu-118 and 122–124 (GHL). At Lys-227 the chain carries N6-(pyridoxal phosphate)lysine.

The protein belongs to the SHMT family. In terms of assembly, homodimer. The cofactor is pyridoxal 5'-phosphate.

The protein resides in the cytoplasm. The catalysed reaction is (6R)-5,10-methylene-5,6,7,8-tetrahydrofolate + glycine + H2O = (6S)-5,6,7,8-tetrahydrofolate + L-serine. Its pathway is one-carbon metabolism; tetrahydrofolate interconversion. It functions in the pathway amino-acid biosynthesis; glycine biosynthesis; glycine from L-serine: step 1/1. Catalyzes the reversible interconversion of serine and glycine with tetrahydrofolate (THF) serving as the one-carbon carrier. This reaction serves as the major source of one-carbon groups required for the biosynthesis of purines, thymidylate, methionine, and other important biomolecules. Also exhibits THF-independent aldolase activity toward beta-hydroxyamino acids, producing glycine and aldehydes, via a retro-aldol mechanism. The sequence is that of Serine hydroxymethyltransferase from Mycolicibacterium paratuberculosis (strain ATCC BAA-968 / K-10) (Mycobacterium paratuberculosis).